The chain runs to 453 residues: Trigger factor (453 aa).

Residues 171–256 enclose the PPIase FKBP-type domain; that stretch reads GDRITISFKG…VSLIEAPEEL (86 aa).

Belongs to the FKBP-type PPIase family. Tig subfamily.

It localises to the cytoplasm. It catalyses the reaction [protein]-peptidylproline (omega=180) = [protein]-peptidylproline (omega=0). Involved in protein export. Acts as a chaperone by maintaining the newly synthesized protein in an open conformation. Functions as a peptidyl-prolyl cis-trans isomerase. In Nitrobacter winogradskyi (strain ATCC 25391 / DSM 10237 / CIP 104748 / NCIMB 11846 / Nb-255), this protein is Trigger factor.